Here is a 427-residue protein sequence, read N- to C-terminus: Tryptophan synthase beta chain 1 (427 aa).

An N6-(pyridoxal phosphate)lysine modification is found at Lys-107.

Belongs to the TrpB family. Tetramer of two alpha and two beta chains. Requires pyridoxal 5'-phosphate as cofactor.

The enzyme catalyses (1S,2R)-1-C-(indol-3-yl)glycerol 3-phosphate + L-serine = D-glyceraldehyde 3-phosphate + L-tryptophan + H2O. The protein operates within amino-acid biosynthesis; L-tryptophan biosynthesis; L-tryptophan from chorismate: step 5/5. Its function is as follows. The beta subunit is responsible for the synthesis of L-tryptophan from indole and L-serine. The polypeptide is Tryptophan synthase beta chain 1 (trpB1) (Aeropyrum pernix (strain ATCC 700893 / DSM 11879 / JCM 9820 / NBRC 100138 / K1)).